Here is a 396-residue protein sequence, read N- to C-terminus: S-adenosylmethionine synthase (396 aa).

His-16 provides a ligand contact to ATP. Residue Asp-18 coordinates Mg(2+). Glu-44 provides a ligand contact to K(+). Residues Glu-57 and Gln-100 each contribute to the L-methionine site. Residues 100–110 are flexible loop; it reads QSVDIAQGVDR. ATP contacts are provided by residues 165–167, 231–232, Asp-240, 246–247, Ala-263, and Lys-267; these read DAK, KF, and RK. Asp-240 contributes to the L-methionine binding site. Lys-271 is a binding site for L-methionine.

Belongs to the AdoMet synthase family. In terms of assembly, homotetramer; dimer of dimers. The cofactor is Mg(2+). K(+) is required as a cofactor.

The protein localises to the cytoplasm. It carries out the reaction L-methionine + ATP + H2O = S-adenosyl-L-methionine + phosphate + diphosphate. Its pathway is amino-acid biosynthesis; S-adenosyl-L-methionine biosynthesis; S-adenosyl-L-methionine from L-methionine: step 1/1. In terms of biological role, catalyzes the formation of S-adenosylmethionine (AdoMet) from methionine and ATP. The overall synthetic reaction is composed of two sequential steps, AdoMet formation and the subsequent tripolyphosphate hydrolysis which occurs prior to release of AdoMet from the enzyme. The sequence is that of S-adenosylmethionine synthase from Marinobacter nauticus (strain ATCC 700491 / DSM 11845 / VT8) (Marinobacter aquaeolei).